The primary structure comprises 99 residues: Nucleoid-associated protein EbfC (99 aa).

Belongs to the YbaB/EbfC family. Homodimer.

It localises to the cytoplasm. Its subcellular location is the nucleoid. In terms of biological role, binds to DNA and alters its conformation. May be involved in regulation of gene expression, nucleoid organization and DNA protection. The sequence is that of Nucleoid-associated protein EbfC from Borrelia duttonii (strain Ly).